The chain runs to 366 residues: L-Ala-D/L-Glu epimerase (366 aa).

R24, T135, and K160 together coordinate substrate. Catalysis depends on K162, which acts as the Proton acceptor; specific for (R)-substrate epimerization. Mg(2+) is bound by residues D191, E219, and D244. K268 (proton acceptor; specific for (S)-substrate epimerization) is an active-site residue. Positions 296, 298, 321, and 323 each coordinate substrate.

The protein belongs to the mandelate racemase/muconate lactonizing enzyme family. Homooctamer; tetramer of dimers. The cofactor is Mg(2+).

It catalyses the reaction L-alanyl-L-glutamate = L-alanyl-D-glutamate. Its pathway is cell wall degradation; peptidoglycan degradation. In terms of biological role, catalyzes the epimerization of L-Ala-D-Glu to L-Ala-L-Glu and has probably a role in the metabolism of the murein peptide, of which L-Ala-D-Glu is a component. Is also able to catalyze the reverse reaction and the epimerization of the other Ala-X dipeptides L-Ala-L-Asp, L-Ala-L-Leu, L-Ala-L-Met, and L-Ala-L-Ser. Is not able to epimerize other L-Ala-X dipeptides. Is also active with L-Ser-L-Glu and, oddly, L-Pro-L-Glu, but not with L-Glu-L-Glu, L-Lys-L-Glu, L-Lys-L-Ala, or D-Ala-D-Ala. The polypeptide is L-Ala-D/L-Glu epimerase (ykfB) (Bacillus subtilis (strain 168)).